Reading from the N-terminus, the 488-residue chain is Prostaglandin E2 receptor EP4 subtype (488 aa).

The Extracellular segment spans residues 1–19 (MSTPGVNSSASLSPDRLNS). Asn7 carries an N-linked (GlcNAc...) asparagine glycan. Residues 20–43 (PVTIPAVMFIFGVVGNLVAIVVLC) form a helical membrane-spanning segment. Over 44–55 (KSRKEQKETTFY) the chain is Cytoplasmic. Residues 56 to 79 (TLVCGLAVTDLLGTLLVSPVTIAT) form a helical membrane-spanning segment. Residues 80–96 (YMKGQWPGGQPLCEYST) lie on the Extracellular side of the membrane. A disulfide bridge connects residues Cys92 and Cys170. A helical transmembrane segment spans residues 97 to 115 (FILLFFSLSGLSIICAMSV). Over 116–135 (ERYLAINHAYFYSHYVDKRL) the chain is Cytoplasmic. Residues 136–160 (AGLTLFAVYASNVLFCALPNMGLGS) form a helical membrane-spanning segment. The Extracellular portion of the chain corresponds to 161 to 184 (SRLQYPDTWCFIDWTTNVTAHAAY). A helical membrane pass occupies residues 185 to 211 (SYMYAGFSSFLILATVLCNVLVCGALL). Over 212–267 (RMHRQFMRRTSLGTEQHHAAAAASVASRGHPAASPALPRLSDFRRRRSFRRIAGAE) the chain is Cytoplasmic. The helical transmembrane segment at 268 to 295 (IQMVILLIATSLVVLICSIPLVVRVFVN) threads the bilayer. Residues 296 to 312 (QLYQPSLEREVSKNPDL) lie on the Extracellular side of the membrane. A helical membrane pass occupies residues 313-332 (QAIRIASVNPILDPWIYILL). The Cytoplasmic segment spans residues 333–488 (RKTVLSKAIE…ETLNLSEKCI (156 aa)). Positions 356–376 (RERSGQHCSDSQRTSSAMSGH) are disordered. Residues 361–376 (QHCSDSQRTSSAMSGH) show a composition bias toward polar residues. Phosphoserine occurs at positions 374, 377, 379, and 382. Polar residues predominate over residues 437-449 (SETSDSSQGQDSE). The segment at 437–475 (SETSDSSQGQDSESVLLVDEAGGSGRAGPAPKGSSLQVT) is disordered.

It belongs to the G-protein coupled receptor 1 family. Interacts with FEM1A. Post-translationally, phosphorylation mediates agonist-mediated desensitization by promoting cytoplasmic retention. In terms of tissue distribution, high in intestine and in peripheral blood mononuclear cells; low in lung, kidney, thymus, uterus, vasculature and brain. Not found in liver, heart, retina oe skeletal muscle.

The protein resides in the cell membrane. Receptor for prostaglandin E2 (PGE2). The activity of this receptor is mediated by G(s) proteins that stimulate adenylate cyclase. Has a relaxing effect on smooth muscle. May play an important role in regulating renal hemodynamics, intestinal epithelial transport, adrenal aldosterone secretion, and uterine function. This Homo sapiens (Human) protein is Prostaglandin E2 receptor EP4 subtype (PTGER4).